The sequence spans 343 residues: ATP-dependent (S)-NAD(P)H-hydrate dehydratase (343 aa).

The transit peptide at 1–42 (MAVCPYGAAAVVMALLSAAIAFHCSPLLAVLQRALSLHTAHA) directs the protein to the mitochondrion. Positions 49–340 (LFQLVRNIVP…AEVGAAFSKL (292 aa)) constitute a YjeF C-terminal domain. Lysine 63 is subject to N6-acetyllysine. Tyrosine 81 carries the post-translational modification Phosphotyrosine. (6S)-NADPHX-binding positions include glycine 149 and 202–208 (NHVEFSR). Residues 242-246 (KGEQD) and 261-270 (GSSRRCGGQG) contribute to the ATP site. Aspartate 271 provides a ligand contact to (6S)-NADPHX.

The protein belongs to the NnrD/CARKD family. Requires Mg(2+) as cofactor.

The protein resides in the mitochondrion. The catalysed reaction is (6S)-NADHX + ATP = ADP + phosphate + NADH + H(+). It carries out the reaction (6S)-NADPHX + ATP = ADP + phosphate + NADPH + H(+). Its function is as follows. Catalyzes the dehydration of the S-form of NAD(P)HX at the expense of ATP, which is converted to ADP. Together with NAD(P)HX epimerase, which catalyzes the epimerization of the S- and R-forms, the enzyme allows the repair of both epimers of NAD(P)HX, a damaged form of NAD(P)H that is a result of enzymatic or heat-dependent hydration. The chain is ATP-dependent (S)-NAD(P)H-hydrate dehydratase from Rattus norvegicus (Rat).